The chain runs to 481 residues: Leukocyte immunoglobulin-like receptor subfamily A member 6 (481 aa).

Positions 1 to 23 (MTPALTALLCLGLSLGPRTRVQA) are cleaved as a signal peptide. Topologically, residues 24 to 447 (GPFPKPTLWA…SHAKDYTVEN (424 aa)) are extracellular. An intrachain disulfide couples Cys-49 to Cys-98. Residues 59-70 (QLDKEGSPEPLD) are compositionally biased toward basic and acidic residues. Residues 59 to 78 (QLDKEGSPEPLDRNNPLEPK) are disordered. An N-linked (GlcNAc...) asparagine glycan is attached at Asn-139. Intrachain disulfides connect Cys-144-Cys-196 and Cys-245-Cys-296. Ig-like C2-type domains are found at residues 225–314 (PSLL…DPLN) and 323–408 (DTVS…HLLS). N-linked (GlcNAc...) asparagine glycans are attached at residues Asn-301 and Asn-340. Cysteines 345 and 396 form a disulfide. Positions 419 to 439 (SGHSGGSSLPPTGPPSTPASH) are disordered. Residues 448–468 (LIRMGMAGLVLVFLGILLFEA) traverse the membrane as a helical segment. The Cytoplasmic segment spans residues 469 to 481 (QHSQRNPQDAAGR).

The protein localises to the membrane. Its function is as follows. May act as receptor for class I MHC antigens. This is Leukocyte immunoglobulin-like receptor subfamily A member 6 (LILRA6) from Homo sapiens (Human).